Consider the following 451-residue polypeptide: MNLEVKKIDTANARLSAKLSIENLEKRYDKIAQKIAQKVKIDGFRRGKVPLSLVKTRYQAQIEQDAQEEMIQEVLKNAFKELGIENKDLIGSPNLTKFEKKDTHFEIEADIGLKPTIVLDKIKECVPSVGVEIPNEEKINERLKQLAKDYAKFVDTDAQRKAQNDDKLTIDFEGFIDNAPFEGGKAENFNLILGSKQMLEDFEKALLGMQAGEEKEFPLTFPSGYHAEHLAGKEALFKVKLHQIQAREALEINDELAKIVLANEENATLKLLKERVEGQLFLENKARLYNEELKEKLIENLDEKIVFDLPKTIIEQEMDLLFRNALYSMQAEEVKSLQESQEKAKEKRESFRNDATKSVKITFIIDALAKEEKIGVHDNEVFQTLYYEAMMTGQNPENLIEQYRKNNMLAAVKMAMIEDRVLAYLLDKNLPKEQQEILEKMRPNAQKIQAG.

A PPIase FKBP-type domain is found at 165 to 250 (DDKLTIDFEG…LHQIQAREAL (86 aa)).

Belongs to the FKBP-type PPIase family. Tig subfamily.

The protein localises to the cytoplasm. The catalysed reaction is [protein]-peptidylproline (omega=180) = [protein]-peptidylproline (omega=0). In terms of biological role, involved in protein export. Acts as a chaperone by maintaining the newly synthesized protein in an open conformation. Functions as a peptidyl-prolyl cis-trans isomerase. This chain is Trigger factor, found in Helicobacter pylori (strain HPAG1).